Consider the following 114-residue polypeptide: T cell receptor beta variable 6-6 (114 aa).

Residues 1–21 (MSISLLCCAAFPLLWAGPVNA) form the signal peptide. Positions 22–114 (GVTQTPKFRI…TSVYFCASSY (93 aa)) constitute an Ig-like domain. Cysteine 42 and cysteine 110 are joined by a disulfide. An N-linked (GlcNAc...) asparagine glycan is attached at asparagine 84.

Alpha-beta TR is a heterodimer composed of an alpha and beta chain; disulfide-linked. The alpha-beta TR is associated with the transmembrane signaling CD3 coreceptor proteins to form the TR-CD3 (TcR or TCR). The assembly of alpha-beta TR heterodimers with CD3 occurs in the endoplasmic reticulum where a single alpha-beta TR heterodimer associates with one CD3D-CD3E heterodimer, one CD3G-CD3E heterodimer and one CD247 homodimer forming a stable octameric structure. CD3D-CD3E and CD3G-CD3E heterodimers preferentially associate with TR alpha and TR beta chains, respectively. The association of the CD247 homodimer is the last step of TcR assembly in the endoplasmic reticulum and is required for transport to the cell surface.

It localises to the cell membrane. Its function is as follows. V region of the variable domain of T cell receptor (TR) beta chain that participates in the antigen recognition. Alpha-beta T cell receptors are antigen specific receptors which are essential to the immune response and are present on the cell surface of T lymphocytes. Recognize peptide-major histocompatibility (MH) (pMH) complexes that are displayed by antigen presenting cells (APC), a prerequisite for efficient T cell adaptive immunity against pathogens. Binding of alpha-beta TR to pMH complex initiates TR-CD3 clustering on the cell surface and intracellular activation of LCK that phosphorylates the ITAM motifs of CD3G, CD3D, CD3E and CD247 enabling the recruitment of ZAP70. In turn ZAP70 phosphorylates LAT, which recruits numerous signaling molecules to form the LAT signalosome. The LAT signalosome propagates signal branching to three major signaling pathways, the calcium, the mitogen-activated protein kinase (MAPK) kinase and the nuclear factor NF-kappa-B (NF-kB) pathways, leading to the mobilization of transcription factors that are critical for gene expression and essential for T cell growth and differentiation. The T cell repertoire is generated in the thymus, by V-(D)-J rearrangement. This repertoire is then shaped by intrathymic selection events to generate a peripheral T cell pool of self-MH restricted, non-autoaggressive T cells. Post-thymic interaction of alpha-beta TR with the pMH complexes shapes TR structural and functional avidity. This Homo sapiens (Human) protein is T cell receptor beta variable 6-6.